We begin with the raw amino-acid sequence, 246 residues long: Type III pantothenate kinase (246 aa).

Position 6–13 (6–13) interacts with ATP; the sequence is DVGNTHSV. Residue 103-106 participates in substrate binding; it reads GADR. The Proton acceptor role is filled by Asp-105. K(+) is bound at residue Asp-125. Thr-128 contacts ATP. Thr-179 contacts substrate.

This sequence belongs to the type III pantothenate kinase family. Homodimer. NH4(+) serves as cofactor. The cofactor is K(+).

The protein resides in the cytoplasm. It carries out the reaction (R)-pantothenate + ATP = (R)-4'-phosphopantothenate + ADP + H(+). It participates in cofactor biosynthesis; coenzyme A biosynthesis; CoA from (R)-pantothenate: step 1/5. Catalyzes the phosphorylation of pantothenate (Pan), the first step in CoA biosynthesis. This Thermotoga maritima (strain ATCC 43589 / DSM 3109 / JCM 10099 / NBRC 100826 / MSB8) protein is Type III pantothenate kinase (coaX).